A 159-amino-acid chain; its full sequence is NAD(P)H-quinone oxidoreductase subunit N (159 aa).

This sequence belongs to the complex I NdhN subunit family. In terms of assembly, NDH-1 can be composed of about 15 different subunits; different subcomplexes with different compositions have been identified which probably have different functions.

Its subcellular location is the cell inner membrane. It carries out the reaction a plastoquinone + NADH + (n+1) H(+)(in) = a plastoquinol + NAD(+) + n H(+)(out). The enzyme catalyses a plastoquinone + NADPH + (n+1) H(+)(in) = a plastoquinol + NADP(+) + n H(+)(out). NDH-1 shuttles electrons from an unknown electron donor, via FMN and iron-sulfur (Fe-S) centers, to quinones in the respiratory and/or the photosynthetic chain. The immediate electron acceptor for the enzyme in this species is believed to be plastoquinone. Couples the redox reaction to proton translocation, and thus conserves the redox energy in a proton gradient. Cyanobacterial NDH-1 also plays a role in inorganic carbon-concentration. The sequence is that of NAD(P)H-quinone oxidoreductase subunit N from Gloeobacter violaceus (strain ATCC 29082 / PCC 7421).